The primary structure comprises 470 residues: Dynein axonemal assembly factor 11 (470 aa).

4 LRR repeats span residues 20 to 43, 44 to 65, 66 to 89, and 90 to 110; these read IFSL…DKWC, RELK…VSKL, KKLE…GCES, and LQKL…NSLQ. Residues 128 to 146 form the LRRCT domain; the sequence is YEGYRQYVVATLPQLKWLD. Residues 177 to 288 adopt a coiled-coil conformation; sequence LRKRAAEREK…NRSEEELKKK (112 aa). A disordered region spans residues 182-265; sequence AEREKATNNL…SQYTPESRLE (84 aa). A compositionally biased stretch (basic and acidic residues) spans 194–213; sequence KQKEGRKAQEKKPGFDRRWY. Residues 303-395 form the CS domain; sequence VNESKLDFSL…TEMIQTKRAK (93 aa). Residues 447 to 470 are disordered; it reads HRNSARDTADSEDFIDNAEVPPLV.

This sequence belongs to the tilB family.

It is found in the cytoplasm. The protein resides in the cell projection. Its subcellular location is the cilium. It localises to the dynein axonemal particle. The protein localises to the flagellum. In terms of biological role, involved in dynein arm assembly, is important for expression and transporting outer dynein arm (ODA) proteins from the cytoplasm to the cilia. This chain is Dynein axonemal assembly factor 11 (dnaaf11), found in Xenopus tropicalis (Western clawed frog).